The chain runs to 135 residues: MNEILKILNNIRTLRVHSRECSLEILEEILEKFKVVINERKKEEKKIKEEIAQRAIKLKKYREMLIADGINPNELLTKTNSIKSSEKRKRPKRPAKYKYINKNGDFKTWTGQGRTPSVIKNAILERKKILEDFLL.

A DNA-binding region spans residues 112 to 117; that stretch reads QGRTPS.

Belongs to the histone-like protein H-NS family. Homodimer that oligomerizes on DNA into higher-order complexes that form bridges between disparate regions of DNA compacting it.

It localises to the cytoplasm. Its subcellular location is the nucleoid. Functionally, a DNA-binding protein implicated in transcriptional repression and chromosome organization and compaction. Binds nucleation sites in AT-rich DNA and bridges them, forming higher-order nucleoprotein complexes and condensing the chromosome. A subset of genes are repressed by H-NS in association with other proteins. In Buchnera aphidicola subsp. Acyrthosiphon pisum (strain APS) (Acyrthosiphon pisum symbiotic bacterium), this protein is DNA-binding protein H-NS homolog (hns).